The following is a 407-amino-acid chain: MSASKIPLFKMKGLILFLSLVKMSLAVPAFPQQPGAQGMAPPGMASLSLETMRQLGSLQGLNALSQYSRLGFGKALNSLWLHGLLPPHNSFPWIGPREHETQQPSLQPHQPGLKPFLQPTAATGVQVTPQKPGPQPPMHPGQLPLQEGELIAPDEPQVAPSENPPTPEVPIMDFADPQFPTVFQIARSISRGPMAHNKASAFYPGMFYMSYGANQLNAPARIGFMSSEEMPGERGSPMAYGTLFPRFGGFRQTLRRLNQNSPKGGDFTVEVDSPVSVTKGPEKGEGPEGSPLQEANPGKRENPALLSQMAPGAHAGLLAFPNDHIPSMARGPAGQRLLGVTPAAADPLITPELAEVYETYGADVTTPLGDGEATMDITMSPDTQQPLLPGNKVHQPQVHNAWRFQEP.

The first 26 residues, 1 to 26 (MSASKIPLFKMKGLILFLSLVKMSLA), serve as a signal peptide directing secretion. Pro-42 is modified (hydroxyproline). At Ser-48 the chain carries Phosphoserine. Disordered regions lie at residues 124-143 (GVQVTPQKPGPQPPMHPGQL) and 259-304 (QNSP…ENPA).

It belongs to the ameloblastin family. As to expression, ameloblast-specific.

It is found in the secreted. The protein resides in the extracellular space. The protein localises to the extracellular matrix. Functionally, involved in the mineralization and structural organization of enamel. The sequence is that of Ameloblastin (Ambn) from Mus musculus (Mouse).